The primary structure comprises 398 residues: Phosphoglycerate kinase (398 aa).

Residues 23–25, R38, 61–64, R122, and R155 contribute to the substrate site; these read DFN and HMGK. Residues K206, G297, E328, and 354–357 each bind ATP; that span reads GGDS.

It belongs to the phosphoglycerate kinase family. In terms of assembly, monomer.

The protein localises to the cytoplasm. The enzyme catalyses (2R)-3-phosphoglycerate + ATP = (2R)-3-phospho-glyceroyl phosphate + ADP. It participates in carbohydrate degradation; glycolysis; pyruvate from D-glyceraldehyde 3-phosphate: step 2/5. The sequence is that of Phosphoglycerate kinase from Clostridium botulinum (strain Kyoto / Type A2).